Reading from the N-terminus, the 351-residue chain is Dihydroorotate dehydrogenase (quinone) (351 aa).

FMN contacts are provided by residues 67-71 (AGFDK) and threonine 91. Lysine 71 is a substrate binding site. 116 to 120 (NAMGF) provides a ligand contact to substrate. Residues asparagine 145 and asparagine 178 each contribute to the FMN site. Position 178 (asparagine 178) interacts with substrate. The active-site Nucleophile is the serine 181. Residue asparagine 183 coordinates substrate. Residues lysine 214 and threonine 242 each contribute to the FMN site. 243-244 (NT) is a substrate binding site. FMN contacts are provided by residues glycine 262, glycine 291, and 312–313 (YS).

The protein belongs to the dihydroorotate dehydrogenase family. Type 2 subfamily. In terms of assembly, monomer. It depends on FMN as a cofactor.

It localises to the cell membrane. It carries out the reaction (S)-dihydroorotate + a quinone = orotate + a quinol. It participates in pyrimidine metabolism; UMP biosynthesis via de novo pathway; orotate from (S)-dihydroorotate (quinone route): step 1/1. Functionally, catalyzes the conversion of dihydroorotate to orotate with quinone as electron acceptor. The chain is Dihydroorotate dehydrogenase (quinone) from Helicobacter pylori (strain HPAG1).